A 505-amino-acid chain; its full sequence is MVSIRPDEISSIIRQQIEQYDQQVKVENVGTVLQVGDGIARVYGLEKVMASELLEFEDGTVGIALNLEEDNVGVVLMGEGRDLEEGSTVRSTGRVAQVPVGEGAIGRVVDALVRPIDGKGEIHSTETRLLESPAPGIVQRKSVYEPMQTGITAIDAMIPIGRGQRELIIGDRQTGKTAVAIDTILNQKGSGVICVYVAIGQKASTVAQVVNVLRERGALEYTIVVAANASDPAALQYLAPYTGATLAEYFMYKGKATLVVYDDLSKQAQAYRQMSLLLRRPPGREAYPGDVFYLHSRLLERAAKLSPELGEGSMTALPVVETQAGDVSAYIPTNVISITDGQIFLSSDLFNAGLRPAINAGISVSRVGSAAQIKAMKQVAGKLKLELAQFDELQAFAQFASDLDKATQNQLARGQRLRELLKQPQYSPIPVEEQVALIYAGTNGYLDEIPTDKVTSFTAGFREYLHNSQPKYGELVRSEKKLGDEAEGLLKSALNDYKKTFLAMA.

Residue 170 to 177 (GDRQTGKT) participates in ATP binding.

Belongs to the ATPase alpha/beta chains family. F-type ATPases have 2 components, CF(1) - the catalytic core - and CF(0) - the membrane proton channel. CF(1) has five subunits: alpha(3), beta(3), gamma(1), delta(1), epsilon(1). CF(0) has four main subunits: a, b, b' and c.

The protein resides in the cellular thylakoid membrane. The catalysed reaction is ATP + H2O + 4 H(+)(in) = ADP + phosphate + 5 H(+)(out). In terms of biological role, produces ATP from ADP in the presence of a proton gradient across the membrane. The alpha chain is a regulatory subunit. The polypeptide is ATP synthase subunit alpha (Cyanothece sp. (strain PCC 7425 / ATCC 29141)).